A 160-amino-acid chain; its full sequence is SsrA-binding protein (160 aa).

The disordered stretch occupies residues 132–160 (KEFDKRDTVRERDSNRELQRTMRNKGKEE).

The protein belongs to the SmpB family.

It is found in the cytoplasm. Functionally, required for rescue of stalled ribosomes mediated by trans-translation. Binds to transfer-messenger RNA (tmRNA), required for stable association of tmRNA with ribosomes. tmRNA and SmpB together mimic tRNA shape, replacing the anticodon stem-loop with SmpB. tmRNA is encoded by the ssrA gene; the 2 termini fold to resemble tRNA(Ala) and it encodes a 'tag peptide', a short internal open reading frame. During trans-translation Ala-aminoacylated tmRNA acts like a tRNA, entering the A-site of stalled ribosomes, displacing the stalled mRNA. The ribosome then switches to translate the ORF on the tmRNA; the nascent peptide is terminated with the 'tag peptide' encoded by the tmRNA and targeted for degradation. The ribosome is freed to recommence translation, which seems to be the essential function of trans-translation. The sequence is that of SsrA-binding protein from Pseudomonas entomophila (strain L48).